A 76-amino-acid chain; its full sequence is Large ribosomal subunit protein uL24 (76 aa).

The protein belongs to the universal ribosomal protein uL24 family. In terms of assembly, part of the 50S ribosomal subunit.

Its function is as follows. One of two assembly initiator proteins, it binds directly to the 5'-end of the 23S rRNA, where it nucleates assembly of the 50S subunit. One of the proteins that surrounds the polypeptide exit tunnel on the outside of the subunit. The chain is Large ribosomal subunit protein uL24 from Wolinella succinogenes (strain ATCC 29543 / DSM 1740 / CCUG 13145 / JCM 31913 / LMG 7466 / NCTC 11488 / FDC 602W) (Vibrio succinogenes).